The sequence spans 505 residues: Maturase K (505 aa).

This sequence belongs to the intron maturase 2 family. MatK subfamily.

It localises to the plastid. Its subcellular location is the chloroplast. In terms of biological role, usually encoded in the trnK tRNA gene intron. Probably assists in splicing its own and other chloroplast group II introns. The protein is Maturase K of Ficus carica (Common fig).